The chain runs to 434 residues: D-amino acid dehydrogenase (434 aa).

3–17 (VIVLGSGVIGTTTAY) contributes to the FAD binding site.

Belongs to the DadA oxidoreductase family. It depends on FAD as a cofactor.

The catalysed reaction is a D-alpha-amino acid + A + H2O = a 2-oxocarboxylate + AH2 + NH4(+). The protein operates within amino-acid degradation; D-alanine degradation; NH(3) and pyruvate from D-alanine: step 1/1. Functionally, oxidative deamination of D-amino acids. The protein is D-amino acid dehydrogenase of Bordetella petrii (strain ATCC BAA-461 / DSM 12804 / CCUG 43448).